The following is a 24-amino-acid chain: KLGEFSPTRTYRGHNKKDKKMQKK.

The segment at 1-24 (KLGEFSPTRTYRGHNKKDKKMQKK) is disordered. Basic residues predominate over residues 11–24 (YRGHNKKDKKMQKK).

The protein belongs to the universal ribosomal protein uS19 family.

Functionally, protein S19 forms a complex with S13 that binds strongly to the 16S ribosomal RNA. This Phytoplasma sp. (strain STRAWB2) protein is Small ribosomal subunit protein uS19.